A 306-amino-acid chain; its full sequence is Glutaminase (306 aa).

Positions 64, 115, 159, 166, 190, 242, and 260 each coordinate substrate.

Belongs to the glutaminase family. Homotetramer.

The enzyme catalyses L-glutamine + H2O = L-glutamate + NH4(+). The sequence is that of Glutaminase from Vibrio parahaemolyticus serotype O3:K6 (strain RIMD 2210633).